Here is a 453-residue protein sequence, read N- to C-terminus: Carbamoyl phosphate synthase arginine-specific small chain (453 aa).

The transit peptide at 1 to 13 (MFSKLAANFAQRA) directs the protein to the mitochondrion. Positions 233–420 (HVALIDCGVK…LENVRAAKSA (188 aa)) constitute a Glutamine amidotransferase type-1 domain. The active-site Nucleophile is the Cys-309. Residues His-393 and Glu-395 contribute to the active site.

The protein belongs to the CarA family. Heterodimer composed of 2 chains; the small (or glutamine) chain promotes the hydrolysis of glutamine to ammonia, which is used by the large (or ammonia) chain to synthesize carbamoyl phosphate.

It is found in the mitochondrion matrix. It carries out the reaction hydrogencarbonate + L-glutamine + 2 ATP + H2O = carbamoyl phosphate + L-glutamate + 2 ADP + phosphate + 2 H(+). The catalysed reaction is L-glutamine + H2O = L-glutamate + NH4(+). The protein operates within amino-acid biosynthesis; L-arginine biosynthesis; carbamoyl phosphate from bicarbonate: step 1/1. Functionally, small subunit of the arginine-specific carbamoyl phosphate synthase (CPSase). CPSase catalyzes the formation of carbamoyl phosphate from the ammonia moiety of glutamine, carbonate, and phosphate donated by ATP, the first step of the arginine biosynthetic pathway. The small subunit (glutamine amidotransferase) binds and cleaves glutamine to supply the large subunit with the substrate ammonia. The chain is Carbamoyl phosphate synthase arginine-specific small chain (cpa1) from Hypocrea virens (Gliocladium virens).